Reading from the N-terminus, the 301-residue chain is Cytosolic sulfotransferase 2 (301 aa).

Lys53 to Trp58 contacts 3'-phosphoadenylyl sulfate. His115 (proton acceptor) is an active-site residue. Residues Arg137, Ser145, Tyr201, Val235–Met240, and Arg263–Gly265 contribute to the 3'-phosphoadenylyl sulfate site.

This sequence belongs to the sulfotransferase 1 family. As to expression, expressed in liver.

Its subcellular location is the cytoplasm. With respect to regulation, inhibited by Co(2+), Zn(2+), Cd(2+) and Pb(2+) ions. Inactivated by Hg(2+) and Cu(2+) ions. In terms of biological role, sulfotransferase that utilizes 3'-phospho-5'-adenylyl sulfate (PAPS) as sulfonate donor to catalyze the sulfate conjugation of a variety of xenobiotic and endogenous compounds, including 2-naphthol, hydroxychlorobiphenyls, T3 (triiodo-L-thyronine), T4 (thyroxine), estrone and DOPA. This Danio rerio (Zebrafish) protein is Cytosolic sulfotransferase 2.